The primary structure comprises 1088 residues: MGKYNLILSEYLSFVYNSQSAVQIPIYYSSNPELEKRCIDFHAKCVDNSKKGLSLKPLFEEYKDVIDNATLLSILSYSYDKYNAVERKLVNYAKGKPLEADLTANELDYENNKITSELFQSAKEYTYSLMDPAILTSLSSNLNAVMFWLERHSNDVADANKIYKRRLDLFTIVASTINKYGVPRHNEKYRYEYEVMKDKPYYLVTWANSAIEMLMSVFSHEDYLIAKELMVLSCSNRSTLAKLVSSPMSILVALIDINGTFITNEEFDLEFSDKYVRAIVPDQTFDELQEMIDNMKKAGLVDIPRMIQEWLVDCSLEKFTLMSKIYSWSFHVGFRKQKMIDAALDQLKTEYTEDVDNEMYNEYTMLIRDEIVKMLEVPVKHDDHLLRNSELAGLLSMSSASNGASRQLKFGRKTIFSTKKNMHVMDDIARGRYTPGVIPPVNVDRPIPLGRRDVPGRRTRIIFILPYEYFIAQHAVVEKMLSYAKHTREYAEFYSQSNQLLSYGDVTRFLSSNSMVLYTDVSQWDSSQHNTQPFRKGIIMGLDMLANMTNDPKVVQTLNLYKQTQINLMDSYVQIPDGDVIKKIQYGAVASGEKQTKAANSIANLALIKTVLSRIANKYSFITKIIRVDGDDNYAVLQFNTDVTKQMVQEVSNDVRYIYSRMNAKVKALVSTVGIEIAKRYIAGGKIFFRAGINLLNNEKRGQSTQWDQAAILYSNYIVNKLRGFETDREFILTKIIQMTSVAITGSLRLFPSERVLTTNSTFKVFDSEDFIIEYGTTDDEVYIQRAFMSLSSQKSGIADEIASSQTFKNYVSKLSDQLLVSKNAIVSKGIAVTEKAKLNSYAPVYLEKRRAQISALLTMLQKPVSFKSNKITINDILRDIKPFFVTTEASLPIQYRKFMPTLPDNVQYVIQCIGSRTYQIEDSGSKSSISKLISKYSVYKPSIEELYRVISLREQEIQLYLVSLGVPPVDASTYVGSRIYSQDKYKILESYVYNLLSINYGCYQLFDFNSPDLEKLIRIPFKGKIPAVTFILHLYAKLEIINYAIKNKSWISLFCNYPKSEMIKLWKKMWNITAFRSPYTSANFFED.

Positions 501-687 constitute a RdRp catalytic domain; sequence LSYGDVTRFL…AKRYIAGGKI (187 aa).

It belongs to the reoviridae RNA-directed RNA polymerase family. As to quaternary structure, interacts with VP3 (Potential). Interacts with VP2; this interaction activates VP1. Interacts with NSP5; this interaction is probably necessary for the formation of functional virus factories. Interacts with NSP2; this interaction is weak. Mg(2+) serves as cofactor.

The protein resides in the virion. The enzyme catalyses RNA(n) + a ribonucleoside 5'-triphosphate = RNA(n+1) + diphosphate. Its function is as follows. RNA-directed RNA polymerase that is involved in both transcription and genome replication. Together with VP3 capping enzyme, forms an enzyme complex positioned near the channels situated at each of the five-fold vertices of the core. Following infection, the outermost layer of the virus is lost, leaving a double-layered particle (DLP) made up of the core and VP6 shell. VP1 then catalyzes the transcription of fully conservative plus-strand genomic RNAs that are extruded through the DLP's channels into the cytoplasm where they function as mRNAs for translation of viral proteins. One copy of each of the viral (+)RNAs is also recruited during core assembly, together with newly synthesized polymerase complexes and VP2. The polymerase of these novo-formed particles catalyzes the synthesis of complementary minus-strands leading to dsRNA formation. To do so, the polymerase specifically recognizes and binds 4 bases 5'-UGUG-3' in the conserved 3'-sequence of plus-strand RNA templates. VP2 presumably activates the autoinhibited VP1-RNA complex to coordinate packaging and genome replication. Once dsRNA synthesis is complete, the polymerase switches to the transcriptional mode, thus providing secondary transcription. The sequence is that of RNA-directed RNA polymerase from Rotavirus A (strain RVA/Pig/United States/Gottfried/1983/G4P2B[6]) (RV-A).